We begin with the raw amino-acid sequence, 430 residues long: 5-methylthioadenosine/S-adenosylhomocysteine deaminase (430 aa).

Residues histidine 63 and histidine 65 each coordinate Zn(2+). 3 residues coordinate substrate: glutamate 92, arginine 144, and histidine 182. Histidine 209 serves as a coordination point for Zn(2+). Glutamate 212 and aspartate 297 together coordinate substrate. Aspartate 297 serves as a coordination point for Zn(2+).

It belongs to the metallo-dependent hydrolases superfamily. MTA/SAH deaminase family. The cofactor is Zn(2+).

It catalyses the reaction S-adenosyl-L-homocysteine + H2O + H(+) = S-inosyl-L-homocysteine + NH4(+). The enzyme catalyses S-methyl-5'-thioadenosine + H2O + H(+) = S-methyl-5'-thioinosine + NH4(+). Functionally, catalyzes the deamination of 5-methylthioadenosine and S-adenosyl-L-homocysteine into 5-methylthioinosine and S-inosyl-L-homocysteine, respectively. Is also able to deaminate adenosine. In Desulforudis audaxviator (strain MP104C), this protein is 5-methylthioadenosine/S-adenosylhomocysteine deaminase.